The primary structure comprises 729 residues: Phosphoribosylformylglycinamidine synthase subunit PurL (729 aa).

Residue His54 is part of the active site. ATP-binding residues include Tyr57 and Lys96. Mg(2+) is bound at residue Glu98. Substrate is bound by residues 99–102 (SHNH) and Arg121. His100 functions as the Proton acceptor in the catalytic mechanism. Asp122 is a binding site for Mg(2+). Residue Gln245 participates in substrate binding. Residue Asp273 coordinates Mg(2+). Residue 317 to 319 (ETQ) coordinates substrate. The ATP site is built by Asp495 and Gly532. Asn533 is a binding site for Mg(2+). Position 535 (Ser535) interacts with substrate.

Belongs to the FGAMS family. In terms of assembly, monomer. Part of the FGAM synthase complex composed of 1 PurL, 1 PurQ and 2 PurS subunits.

It localises to the cytoplasm. It catalyses the reaction N(2)-formyl-N(1)-(5-phospho-beta-D-ribosyl)glycinamide + L-glutamine + ATP + H2O = 2-formamido-N(1)-(5-O-phospho-beta-D-ribosyl)acetamidine + L-glutamate + ADP + phosphate + H(+). It functions in the pathway purine metabolism; IMP biosynthesis via de novo pathway; 5-amino-1-(5-phospho-D-ribosyl)imidazole from N(2)-formyl-N(1)-(5-phospho-D-ribosyl)glycinamide: step 1/2. In terms of biological role, part of the phosphoribosylformylglycinamidine synthase complex involved in the purines biosynthetic pathway. Catalyzes the ATP-dependent conversion of formylglycinamide ribonucleotide (FGAR) and glutamine to yield formylglycinamidine ribonucleotide (FGAM) and glutamate. The FGAM synthase complex is composed of three subunits. PurQ produces an ammonia molecule by converting glutamine to glutamate. PurL transfers the ammonia molecule to FGAR to form FGAM in an ATP-dependent manner. PurS interacts with PurQ and PurL and is thought to assist in the transfer of the ammonia molecule from PurQ to PurL. In Staphylococcus aureus (strain bovine RF122 / ET3-1), this protein is Phosphoribosylformylglycinamidine synthase subunit PurL.